A 345-amino-acid chain; its full sequence is UDP-N-acetylenolpyruvoylglucosamine reductase (345 aa).

The region spanning 25–193 (LPAHCTDFVS…VGVTFLLPKA (169 aa)) is the FAD-binding PCMH-type domain. The active site involves arginine 169. The active-site Proton donor is the serine 237. Glutamate 333 is a catalytic residue.

It belongs to the MurB family. Requires FAD as cofactor.

It is found in the cytoplasm. It carries out the reaction UDP-N-acetyl-alpha-D-muramate + NADP(+) = UDP-N-acetyl-3-O-(1-carboxyvinyl)-alpha-D-glucosamine + NADPH + H(+). It functions in the pathway cell wall biogenesis; peptidoglycan biosynthesis. Cell wall formation. The protein is UDP-N-acetylenolpyruvoylglucosamine reductase of Pseudoalteromonas atlantica (strain T6c / ATCC BAA-1087).